A 211-amino-acid polypeptide reads, in one-letter code: Protein-L-isoaspartate O-methyltransferase (211 aa).

S62 is a catalytic residue.

This sequence belongs to the methyltransferase superfamily. L-isoaspartyl/D-aspartyl protein methyltransferase family.

It localises to the cytoplasm. It catalyses the reaction [protein]-L-isoaspartate + S-adenosyl-L-methionine = [protein]-L-isoaspartate alpha-methyl ester + S-adenosyl-L-homocysteine. Its function is as follows. Catalyzes the methyl esterification of L-isoaspartyl residues in peptides and proteins that result from spontaneous decomposition of normal L-aspartyl and L-asparaginyl residues. It plays a role in the repair and/or degradation of damaged proteins. This chain is Protein-L-isoaspartate O-methyltransferase, found in Shewanella pealeana (strain ATCC 700345 / ANG-SQ1).